The primary structure comprises 431 residues: MSKIVKVIGREIIDSRGNPTVEAEVHLEGGFVGLAAAPSGASTGSREALELRDGDKSRFLGKGVLKAVAAVNGPIAQAVIGKDAKDQANIDKIMIDLDGTENKSQFGANAILAVSLAAAKAAAASKGMPLYEHIAELNGTPGKFSMPLPMMNIINGGEHADNNVDIQEFMIQPVGAKTLKEAVRIGSEVFHHLAKVLKAKGLNTAVGDEGGYAPNLGSNAEALAVIAEAVKAAGYELGKDITLAMDCAASEFYKDGKYVLAGEGNKAFTSEEFTHFLEDLTKQYPIVSIEDGLDESDWAGFKYQTEVLGDKIQLVGDDLFVTNTKILKEGIEKGVANSILIKFNQIGSLTETLAAIKMAKDAGYTAVISHRSGETEDATIADLAVGTAAGQIKTGSMSRSDRVAKYNQLIRIEEALGDRAPFNGLKEVKGQ.

Gln-167 contacts (2R)-2-phosphoglycerate. The active-site Proton donor is the Glu-209. Mg(2+) contacts are provided by Asp-246, Glu-290, and Asp-317. (2R)-2-phosphoglycerate-binding residues include Lys-342, Arg-371, Ser-372, and Lys-393. The active-site Proton acceptor is Lys-342.

It belongs to the enolase family. As to quaternary structure, component of the RNA degradosome, a multiprotein complex involved in RNA processing and mRNA degradation. Mg(2+) is required as a cofactor.

The protein localises to the cytoplasm. Its subcellular location is the secreted. It localises to the cell surface. The catalysed reaction is (2R)-2-phosphoglycerate = phosphoenolpyruvate + H2O. The protein operates within carbohydrate degradation; glycolysis; pyruvate from D-glyceraldehyde 3-phosphate: step 4/5. Catalyzes the reversible conversion of 2-phosphoglycerate (2-PG) into phosphoenolpyruvate (PEP). It is essential for the degradation of carbohydrates via glycolysis. The chain is Enolase from Yersinia pestis bv. Antiqua (strain Antiqua).